The following is a 165-amino-acid chain: Dihydrofolate reductase type A13 (165 aa).

In terms of domain architecture, DHFR spans 7 to 162 (RIYLVAAMGA…ITYTHSVYAR (156 aa)).

The protein belongs to the dihydrofolate reductase family. In terms of assembly, homodimer.

The catalysed reaction is (6S)-5,6,7,8-tetrahydrofolate + NADP(+) = 7,8-dihydrofolate + NADPH + H(+). The protein operates within cofactor biosynthesis; tetrahydrofolate biosynthesis; 5,6,7,8-tetrahydrofolate from 7,8-dihydrofolate: step 1/1. Key enzyme in folate metabolism. Catalyzes an essential reaction for de novo glycine and purine synthesis, and for DNA precursor synthesis. The chain is Dihydrofolate reductase type A13 (dfrA13) from Escherichia coli.